The following is a 401-amino-acid chain: MASGSYWCYSCSRFVWVSDSISCPDCDGGFLELIQEPLDFTPSDSFTTTTTTQHRSPTRFPPPSSSSSTPSASMHADNSPTPTIVTRTRSNRSPNPVIVLRGSAAAPSSDVVSEGLDRSAFQMYYDDGTDSGLRPLPPSMTEFLLGSGFDRLLDQISQIELNTNRNLRSCEHPPASKSAIEALPLIEIDPTHLLSDSQSHCAVCKENFVLKSSAREMPCNHIYHPDCILPWLAIRNSCPVCRHELPAEDLTDGTGAALTAVTATAEEEEDSAAGLTIWRLPGGGFAVGRIPGGWRGGDRMMPVVYTEVDGGRLGDERLPRRVAWGSRRGGRDGGGSRERGGGFAGRIMRLFGCFSGSSGSIAAAAAASSGSGSRIRVTRRTRSFSMFSTASSSSRRRNWLA.

The disordered stretch occupies residues 41–93 (TPSDSFTTTTTTQHRSPTRFPPPSSSSSTPSASMHADNSPTPTIVTRTRSNRS). Residues 76–93 (ADNSPTPTIVTRTRSNRS) are compositionally biased toward polar residues. The segment at 201–242 (CAVCKENFVLKSSAREMPCNHIYHPDCILPWLAIRNSCPVCR) adopts an RING-type; atypical zinc-finger fold.

It carries out the reaction S-ubiquitinyl-[E2 ubiquitin-conjugating enzyme]-L-cysteine + [acceptor protein]-L-lysine = [E2 ubiquitin-conjugating enzyme]-L-cysteine + N(6)-ubiquitinyl-[acceptor protein]-L-lysine.. The protein operates within protein modification; protein ubiquitination. Functionally, probable E3 ubiquitin-protein ligase that may possess E3 ubiquitin ligase activity in vitro. The chain is Probable E3 ubiquitin-protein ligase RHC2A from Arabidopsis thaliana (Mouse-ear cress).